Here is a 717-residue protein sequence, read N- to C-terminus: Ubinuclein-2 (717 aa).

Disordered stretches follow at residues 114–136 (KDGS…TEDS), 166–308 (LERI…SAKS), and 620–717 (ADSS…NLPS). The segment covering 118–136 (DGEELDGAPDDDDYDTEDS) has biased composition (acidic residues). 2 stretches are compositionally biased toward polar residues: residues 214 to 246 (QSAS…NGND) and 285 to 308 (SSKS…SAKS). The span at 623 to 632 (SFERSKQQHE) shows a compositional bias: basic and acidic residues. The Nuclear localization signal signature appears at 634-641 (LKRTSSLS). Residues 653–665 (KTEPALEETHLPA) are compositionally biased toward basic and acidic residues. Positions 675 to 705 (RQTHLKSKTHKQVQVHPQSKAHKQAQVHPKA) are enriched in basic residues. Residues 706 to 717 (KTQTPPDLNLPS) show a composition bias toward polar residues.

The protein belongs to the ubinuclein family. As to quaternary structure, component of the HIRA complex made of UBN1, UBN2, ASF1A, CABIN1 and HIRA. Interacts with HIRA.

The protein resides in the nucleus. It is found in the nucleolus. Its function is as follows. May be required for replication-independent chromatin assembly. The chain is Ubinuclein-2 from Arabidopsis thaliana (Mouse-ear cress).